The following is a 66-amino-acid chain: Beta-mammal toxin Co3 (66 aa).

An LCN-type CS-alpha/beta domain is found at 1 to 66; it reads KEGYIVNYYD…VWPLPNKTCN (66 aa). Cystine bridges form between C12–C65, C16–C41, C25–C46, and C29–C48.

Expressed by the venom gland.

The protein resides in the secreted. Its function is as follows. Beta toxins bind voltage-independently at site-4 of sodium channels (Nav) and shift the voltage of activation toward more negative potentials thereby affecting sodium channel activation and promoting spontaneous and repetitive firing. This toxin acts on human Nav1.2/SCN2A, Nav1.4/SCN4A and Nav1.6/SCN8A voltage-gated sodium channels. Also, it reduces the peak of sodium currents in Nav1.5/SCN5A at all potentials. In vivo, is lethal to mice when intraperitoneally injected at a dose of 5ug. No activity is observed when injected into crickets or woodlice. This chain is Beta-mammal toxin Co3, found in Centruroides ornatus (Scorpion).